We begin with the raw amino-acid sequence, 328 residues long: P2Y purinoceptor 6 (328 aa).

Over M1–L27 the chain is Extracellular. Residue N5 is glycosylated (N-linked (GlcNAc...) asparagine). Residues L28–I48 form a helical membrane-spanning segment. Residues A49–A62 lie on the Cytoplasmic side of the membrane. The helical transmembrane segment at V63 to I83 threads the bilayer. Topologically, residues Y84–F101 are extracellular. C99 and C177 form a disulfide bridge. Residues V102 to F122 traverse the membrane as a helical segment. Residues Q123–A144 are Cytoplasmic-facing. Residues W145–F165 traverse the membrane as a helical segment. The Extracellular portion of the chain corresponds to A166–M194. Residue N173 is glycosylated (N-linked (GlcNAc...) asparagine). Residues A195 to M215 traverse the membrane as a helical segment. Over A216–K236 the chain is Cytoplasmic. A helical transmembrane segment spans residues A237–I257. Residues T258–A280 lie on the Extracellular side of the membrane. Residues A281–F303 traverse the membrane as a helical segment. At T304–V328 the chain is on the cytoplasmic side.

This sequence belongs to the G-protein coupled receptor 1 family.

It is found in the cell membrane. Functionally, receptor for extracellular UTP &gt; ADP = 2-methylthio-ATP &gt; ADP-beta-S &gt; ATP = ATP-gamma-S. The activity of this receptor is mediated by G proteins which activate a phosphatidylinositol-calcium second messenger system. Functionally coupled to phospholipase C. The protein is P2Y purinoceptor 6 (P2ry6) of Mus musculus (Mouse).